Reading from the N-terminus, the 425-residue chain is Protein UL117 (425 aa).

Positions 59–83 (PTTTSSSLAPPRDDERRPTPPLRPP) are disordered.

The protein belongs to the herpesviridae U84 family.

Its subcellular location is the host nucleus. Plays a role in the inhibition of host DNA replication in the infected cell. Targets the mini-chromosome maintenance (MCM) complex and blocks the accumulation of MCM proteins and their loading onto host chromatin. This Homo sapiens (Human) protein is Protein UL117 (UL117).